A 172-amino-acid chain; its full sequence is Myosin regulatory light chain 2, smooth muscle minor isoform (172 aa).

Ser2 carries the post-translational modification N-acetylserine. Thr19 carries the post-translational modification Phosphothreonine; by MLCK. Ser20 carries the post-translational modification Phosphoserine; by MLCK. 3 consecutive EF-hand domains span residues 29 to 64, 98 to 133, and 134 to 169; these read SQIQEFKEAFNMIDQNRDGFIDKEDLHDMLASLGKN, DPEDVIRNAFACFDEEATGFIQEDYLRELLTTMGDR, and FTDEEVDELYREAPIDKKGNFNYIEFTRILKHGAKD. Ca(2+) contacts are provided by Asp42, Asn44, Asp46, and Asp53.

In terms of assembly, myosin is a hexamer of 2 heavy chains and 4 light chains. Phosphorylation increases the actin-activated myosin ATPase activity and thereby regulates the contractile activity.

In terms of biological role, myosin regulatory subunit that plays an important role in regulation of both smooth muscle and nonmuscle cell contractile activity. Implicated in cytokinesis, receptor capping, and cell locomotion. The protein is Myosin regulatory light chain 2, smooth muscle minor isoform of Gallus gallus (Chicken).